Reading from the N-terminus, the 714-residue chain is Polyribonucleotide nucleotidyltransferase (714 aa).

Mg(2+) is bound by residues Asp496 and Asp502. Positions 562-621 (PRLLTIKIDPDLIGMVIGPGGKTIKGITEQTRAKVDIADDGTVTIASSESENAEKAKRLI) constitute a KH domain. The 69-residue stretch at 631 to 699 (GDVYFGKVTR…NKGRINLTRL (69 aa)) folds into the S1 motif domain.

It belongs to the polyribonucleotide nucleotidyltransferase family. Mg(2+) serves as cofactor.

The protein localises to the cytoplasm. It carries out the reaction RNA(n+1) + phosphate = RNA(n) + a ribonucleoside 5'-diphosphate. Functionally, involved in mRNA degradation. Catalyzes the phosphorolysis of single-stranded polyribonucleotides processively in the 3'- to 5'-direction. The sequence is that of Polyribonucleotide nucleotidyltransferase from Picosynechococcus sp. (strain ATCC 27264 / PCC 7002 / PR-6) (Agmenellum quadruplicatum).